A 618-amino-acid polypeptide reads, in one-letter code: DNA mismatch repair protein MutL (618 aa).

Residues 367 to 381 (EPTAAREPATPRYSG) are compositionally biased toward low complexity. Positions 367–402 (EPTAAREPATPRYSGGASGGNGGRQSAGGWPHAQPG) are disordered. Gly residues predominate over residues 382–392 (GASGGNGGRQS).

It belongs to the DNA mismatch repair MutL/HexB family.

Functionally, this protein is involved in the repair of mismatches in DNA. It is required for dam-dependent methyl-directed DNA mismatch repair. May act as a 'molecular matchmaker', a protein that promotes the formation of a stable complex between two or more DNA-binding proteins in an ATP-dependent manner without itself being part of a final effector complex. This is DNA mismatch repair protein MutL from Salmonella gallinarum (strain 287/91 / NCTC 13346).